The chain runs to 96 residues: Ferredoxin-1 (96 aa).

One can recognise a 2Fe-2S ferredoxin-type domain in the interval 1–95; the sequence is MKVIINGKEF…DCDEIVIESE (95 aa). Residues C34, C39, C42, and C78 each contribute to the [2Fe-2S] cluster site. C52 and C87 are joined by a disulfide.

The protein belongs to the 2Fe2S plant-type ferredoxin family. [2Fe-2S] cluster is required as a cofactor.

In terms of biological role, ferredoxins are iron-sulfur proteins that transfer electrons in a wide variety of metabolic reactions. The sequence is that of Ferredoxin-1 (fdx1) from Aquifex aeolicus (strain VF5).